The chain runs to 663 residues: Terreic acid cluster-specific transcription factor atF (663 aa).

Residues 1–20 (MFATFNSSMDNRSSANSPVA) are compositionally biased toward polar residues. 2 disordered regions span residues 1–28 (MFAT…PKRT) and 55–126 (TRGV…SPSQ). Positions 34 to 60 (CDWCRLNRVKCDDGQPCKNCRTRGVRC) form a DNA-binding region, zn(2)-C6 fungal-type. Over residues 55–64 (TRGVRCRKGS) the composition is skewed to basic residues. 2 stretches are compositionally biased toward low complexity: residues 73-88 (SSSA…QGAQ) and 105-125 (ATTS…PSPS).

It localises to the nucleus. Its function is as follows. Transcription factor that regulates the expression of the gene cluster that mediates the biosynthesis of terreic acid, a quinone epoxide inhibitor of Bruton's tyrosine kinase. This chain is Terreic acid cluster-specific transcription factor atF, found in Aspergillus terreus (strain NIH 2624 / FGSC A1156).